The chain runs to 387 residues: Early growth response protein 3 (387 aa).

Positions 241 to 283 are disordered; the sequence is PGFGSLPQPPLTLKPIRPRKYPNRPSKTPLHERPHACPAEGCD. The span at 269–283 shows a compositional bias: basic and acidic residues; sequence PLHERPHACPAEGCD. C2H2-type zinc fingers lie at residues 275 to 299, 305 to 327, and 333 to 355; these read HACP…LRIH, FQCR…IRTH, and FACE…AKIH. Positions 348–387 are disordered; that stretch reads RKRHAKIHLKQKEKKSEKGGAPSASSAPTVSLAPVVTTCA. The span at 350–360 shows a compositional bias: basic residues; that stretch reads RHAKIHLKQKE.

The protein belongs to the EGR C2H2-type zinc-finger protein family.

Its subcellular location is the nucleus. Its function is as follows. Probable transcription factor involved in muscle spindle development. This Mus musculus (Mouse) protein is Early growth response protein 3 (Egr3).